The following is a 116-amino-acid chain: Bacterial microcompartment shell protein CutR (116 aa).

Residues 10–108 enclose the BMC circularly permuted domain; sequence RIIQESVPGK…LEYFKNSLGF (99 aa).

Belongs to the EutS/PduU family. As to quaternary structure, has been crystallized in 5 structures (all are mutated, 3 have an N-terminal His-tag), most are homohexameric with a central pore. In two the homohexamer lies flat with a beta-barrel on the flat face created by the protruding N termini of the six chains. In 2 others the hexamer is not flat but has a six-fold screw axis; the screw pitch is 33.8 or 41.9 Angstroms depending on the structure. Interacts with the BMC major shell protein.

Its subcellular location is the bacterial microcompartment. It functions in the pathway amine and polyamine metabolism; choline degradation. A minor shell protein of the choline degradation-specific bacterial microcompartment (BMC). Proteins such as this one with circularly permuted BMC domains may play a key role in conferring heterogeneity and flexibility in this BMC. This chain is Bacterial microcompartment shell protein CutR, found in Streptococcus intermedius (strain ATCC 27335 / DSM 20573 / CCUG 32759 / CIP 103248 / JCM 12996 / LMG 17840 / NCTC 11324 / SK54 / 1877).